The chain runs to 148 residues: SsrA-binding protein (148 aa).

The protein belongs to the SmpB family.

The protein localises to the cytoplasm. Required for rescue of stalled ribosomes mediated by trans-translation. Binds to transfer-messenger RNA (tmRNA), required for stable association of tmRNA with ribosomes. tmRNA and SmpB together mimic tRNA shape, replacing the anticodon stem-loop with SmpB. tmRNA is encoded by the ssrA gene; the 2 termini fold to resemble tRNA(Ala) and it encodes a 'tag peptide', a short internal open reading frame. During trans-translation Ala-aminoacylated tmRNA acts like a tRNA, entering the A-site of stalled ribosomes, displacing the stalled mRNA. The ribosome then switches to translate the ORF on the tmRNA; the nascent peptide is terminated with the 'tag peptide' encoded by the tmRNA and targeted for degradation. The ribosome is freed to recommence translation, which seems to be the essential function of trans-translation. In Burkholderia ambifaria (strain ATCC BAA-244 / DSM 16087 / CCUG 44356 / LMG 19182 / AMMD) (Burkholderia cepacia (strain AMMD)), this protein is SsrA-binding protein.